We begin with the raw amino-acid sequence, 95 residues long: Large ribosomal subunit protein bL27 (95 aa).

Positions 1 to 6 (MFLQLF) are excised as a propeptide.

This sequence belongs to the bacterial ribosomal protein bL27 family. Post-translationally, the N-terminus is cleaved by ribosomal processing cysteine protease Prp.

The protein is Large ribosomal subunit protein bL27 of Symbiobacterium thermophilum (strain DSM 24528 / JCM 14929 / IAM 14863 / T).